We begin with the raw amino-acid sequence, 46 residues long: Large ribosomal subunit protein bL34 (46 aa).

The protein belongs to the bacterial ribosomal protein bL34 family.

This chain is Large ribosomal subunit protein bL34 (rpmH), found in Mycobacterium avium.